Here is a 275-residue protein sequence, read N- to C-terminus: Thioredoxin-like 1-1, chloroplastic (275 aa).

A chloroplast-targeting transit peptide spans 1-72 (MTEVISKTSL…GDSQDESFRR (72 aa)). Residues 73–206 (SSAITAQTTL…FRDALAKHGP (134 aa)) enclose the Thioredoxin domain. Active-site nucleophile residues include C129 and C132. C129 and C132 are joined by a disulfide. Residues 238 to 275 (KPVPVEKEAATPDSNPSLPVPLPSMSSNDEKTLVSAGR) are disordered. Over residues 249–264 (PDSNPSLPVPLPSMSS) the composition is skewed to low complexity.

Belongs to the thioredoxin family.

The protein localises to the plastid. It is found in the chloroplast. Functionally, thiol-disulfide oxidoreductase that may participate in various redox reactions. Possesses insulin disulfide bonds reducing activity. This chain is Thioredoxin-like 1-1, chloroplastic, found in Arabidopsis thaliana (Mouse-ear cress).